The sequence spans 946 residues: Zinc finger protein rotund (946 aa).

Disordered stretches follow at residues 10 to 30 and 156 to 269; these read GPQLAHHPHSNPHNSSHGHSD and FRKP…HNLN. Over residues 161 to 176 the composition is skewed to polar residues; the sequence is NNNGYSWSTGNNNEVV. The segment covering 177–188 has biased composition (low complexity); it reads SHSSNGHTNNHP. Composition is skewed to polar residues over residues 198-230 and 242-269; these read ASATQATSVSAINLNQAQPASQTRSNFGSSIKS and TCKSQENNSGQNPTPNSLSDHNPAHNLN. C2H2-type zinc fingers lie at residues 488 to 510, 517 to 539, 545 to 567, 573 to 597, 603 to 625, and 634 to 656; these read YQCKMCPQIFSSKADLQLHTQIH, YKCTQCSKAFANSSYLSQHTRIH, YRCEICQRKFTQLSHLQQHIRTH, YKCRHPGCQKAFSQLSNLQSHSRCH, FKCNSCYKCFSDEPSLLEHIPKH, and HICQYCGKSYTQETYLTKHMQKH. The tract at residues 683–853 is disordered; that stretch reads GGSANPANGP…TPSAVGPYDA (171 aa). Composition is skewed to low complexity over residues 739–762 and 770–790; these read HQQQQQQQQQQQQQQQQQQQQQQQ and HGVPPQQHVPPQQQQQQQQQQ. Residues 813 to 822 show a composition bias toward polar residues; that stretch reads TAPNGSQSNG. The span at 828 to 841 shows a compositional bias: basic and acidic residues; sequence QPHHRMPDPVREDI.

Belongs to the krueppel C2H2-type zinc-finger protein family. Interacts with nab; which acts as a corepressor. In terms of tissue distribution, isoform rn and isoform roe are expressed in non-overlapping domains in the larval imaginal disks. Isoform rn is first expressed during the early third larval instar in the leg, wing, haltere and antennal part of the eye-antennal imaginal disk. It is observed as a ring in the leg and antenna disks and in the presumptive wing pouch and capitellum of wing and haltere disks respectively. In wing disk it is expressed in 3 concentric domains in the wing pouch. In late third instar, expression of isoform rn in the leg disk is no longer evident, but is maintained in the other disks. Isoform roe appears in the third instar and is confined to the eye part of the eye-antennal imaginal disk in a band of 4-6 cells at the morphogenetic furrow. There is no evidence of roe expression in other imaginal disks.

It is found in the nucleus. Transcription factor involved in imaginal disks development. Isoform rn is required in the wings, antenna, haltere, proboscis and legs disks, while isoform roe is required in the eye disk. Together with nab corepressor, it is involved in the initiation and maintenance of wingless (wg) expression in the wing hinge, by limiting the expression of wg to this compartment. Also required for the epithelial-mesenchymal transition branch of basolateral junctions signaling. This chain is Zinc finger protein rotund, found in Drosophila melanogaster (Fruit fly).